The chain runs to 307 residues: Protein FAM76A (307 aa).

2 disordered regions span residues serine 161–glutamine 181 and lysine 287–proline 307. Residues isoleucine 217–lysine 297 are a coiled coil.

It belongs to the FAM76 family.

This chain is Protein FAM76A (FAM76A), found in Gallus gallus (Chicken).